Here is a 657-residue protein sequence, read N- to C-terminus: MLELTSEFKPSPDQQEAIKGIVKSIKKGNKYQTLLGVTGSGKTFTMANVIKELNIPTLIMSHNKSLCAQLYSEFKGFFSKNHVEYFISYYDYYQPEAYIPRTDVFIEKDSSTNEDLERLRLSATASLLSYEDVVCIASVSANYGLGNPNEYIGMVLIFELGMQISQKELLKKLVDMGYKRNDNFFDRADFRVQGDIIDIYPAYYEDEVVRLEFFGDELDAMYHYNVLENKKGKDLKRFILYPTSQFSVGETRLKQAIKDIKAELNERLAYFEHENKLVEYQRLKQRVEFDLEMLTSTGMCKGVENYARHLTGLKEGDTPYTLFDYFAIKNRKFLVIVDESHVSLPQFRGMFAGDRSRKQTLVDYGFRLPSALDNRPLMFDEFIHKNCQFLFVSATPAPLELELSKENIFHQIMRPTGLLDPLIELKDSDNQVEILFDEAKKVIQRNERVLVTVLTKKLAEELTRYYLELGIKVKYMHSDIDAIERNEIIRGLRSGAFDMLIGINLLREGLDLPEVSLIAIMDADKEGFLRSTTSLIQTMGRAARNVNGKVLLFCKKITKSMQEAMDTTNERRKLQMAYNKKYNITPTSVKRHIEESLKNEEDLGEIYRKGKKLEKMPASERAKLAKELRKQMLEAAKALEFEKAAAIRDEINKLRDL.

The region spanning 23 to 414 is the Helicase ATP-binding domain; that stretch reads KSIKKGNKYQ…KENIFHQIMR (392 aa). 36-43 provides a ligand contact to ATP; sequence GVTGSGKT. Residues 89-112 carry the Beta-hairpin motif; it reads YYDYYQPEAYIPRTDVFIEKDSST. Residues 431 to 593 form the Helicase C-terminal domain; sequence QVEILFDEAK…ITPTSVKRHI (163 aa). One can recognise a UVR domain in the interval 622–657; the sequence is AKLAKELRKQMLEAAKALEFEKAAAIRDEINKLRDL.

Belongs to the UvrB family. Forms a heterotetramer with UvrA during the search for lesions. Interacts with UvrC in an incision complex.

It localises to the cytoplasm. Functionally, the UvrABC repair system catalyzes the recognition and processing of DNA lesions. A damage recognition complex composed of 2 UvrA and 2 UvrB subunits scans DNA for abnormalities. Upon binding of the UvrA(2)B(2) complex to a putative damaged site, the DNA wraps around one UvrB monomer. DNA wrap is dependent on ATP binding by UvrB and probably causes local melting of the DNA helix, facilitating insertion of UvrB beta-hairpin between the DNA strands. Then UvrB probes one DNA strand for the presence of a lesion. If a lesion is found the UvrA subunits dissociate and the UvrB-DNA preincision complex is formed. This complex is subsequently bound by UvrC and the second UvrB is released. If no lesion is found, the DNA wraps around the other UvrB subunit that will check the other stand for damage. The protein is UvrABC system protein B of Campylobacter jejuni (strain RM1221).